The chain runs to 414 residues: MKTYLVGGAVRDSLLNLPVTEQDWVVVGATPEQLLAQGYQQVGKDFPVFLHPVTHEEYALARTERKSGQGYTGFTCYAAPDVTLEEDLLRRDLTINAIARSSEGELFDPYNGQQDIEKRVLRHVSDAFGEDPLRVLRVARFAARFAHLGFTVASETQSLMAAMAKSGELSALTPERVWKETEKALKTQSPQIYFQVLRDCGALAVLFPEIECLFGVPAPEKWHPEIDTGIHTLMTLAMTAQLSPEVDVRFAALCHDLGKGLTPKEFWPHHHGHGPAGVKLVEQLCQRLRVPNPVRDLAKLVAEYHDLIHTVNKLRPETLLKLFDAIDVWRKPERLEQMIMTSEADARGRTGFEENPYPQGDYLRAAFRIANGVSVQEVVASGLQGLAIRDELKRRRQQALAEWKLTQEVISPLN.

The ATP site is built by glycine 8 and arginine 11. Positions 8 and 11 each coordinate CTP. Residues glutamate 21 and aspartate 23 each contribute to the Mg(2+) site. Residues arginine 91, arginine 137, and arginine 140 each coordinate ATP. Residues arginine 91, arginine 137, and arginine 140 each coordinate CTP. The HD domain occupies 228–329 (TGIHTLMTLA…LKLFDAIDVW (102 aa)).

Belongs to the tRNA nucleotidyltransferase/poly(A) polymerase family. Bacterial CCA-adding enzyme type 1 subfamily. In terms of assembly, monomer. Can also form homodimers and oligomers. Mg(2+) is required as a cofactor. The cofactor is Ni(2+).

It catalyses the reaction a tRNA precursor + 2 CTP + ATP = a tRNA with a 3' CCA end + 3 diphosphate. The enzyme catalyses a tRNA with a 3' CCA end + 2 CTP + ATP = a tRNA with a 3' CCACCA end + 3 diphosphate. Catalyzes the addition and repair of the essential 3'-terminal CCA sequence in tRNAs without using a nucleic acid template. Adds these three nucleotides in the order of C, C, and A to the tRNA nucleotide-73, using CTP and ATP as substrates and producing inorganic pyrophosphate. tRNA 3'-terminal CCA addition is required both for tRNA processing and repair. Also involved in tRNA surveillance by mediating tandem CCA addition to generate a CCACCA at the 3' terminus of unstable tRNAs. While stable tRNAs receive only 3'-terminal CCA, unstable tRNAs are marked with CCACCA and rapidly degraded. This chain is Multifunctional CCA protein, found in Yersinia enterocolitica serotype O:8 / biotype 1B (strain NCTC 13174 / 8081).